Reading from the N-terminus, the 468-residue chain is Acyltransferase R4 (468 aa).

Transmembrane regions (helical) follow at residues 21–41 (GILS…LGYD), 70–90 (LFTI…CLFF), 133–153 (LNLL…TGFF), 252–272 (FLAA…PLFW), 308–328 (DPFG…YPTW), 388–408 (FAVY…LFSW), and 423–443 (IGFG…AAMF).

It belongs to the acyltransferase 3 family.

The protein localises to the membrane. It participates in secondary metabolite biosynthesis. In terms of biological role, acyltransferase; part of the gene cluster that mediates the biosynthesis of squalestatin S1 (SQS1, also known as zaragozic acid A), a heavily oxidized fungal polyketide that offers potent cholesterol lowering activity by targeting squalene synthase (SS). SQS1 is composed of a 2,8-dioxobicyclic[3.2.1]octane-3,4,5-tricarboxyclic acid core that is connected to two lipophilic polyketide arms. These initial steps feature the priming of an unusual benzoic acid starter unit onto the highly reducing polyketide synthase pks2, followed by oxaloacetate extension and product release to generate a tricarboxylic acid containing product. The phenylalanine ammonia lyase (PAL) M7 and the acyl-CoA ligase M9 are involved in transforming phenylalanine into benzoyl-CoA. The citrate synthase-like protein R3 is involved in connecting the C-alpha-carbons of the hexaketide chain and oxaloacetate to afford the tricarboxylic acid unit. The potential hydrolytic enzymes, M8 and M10, are in close proximity to pks2 and may participate in product release. On the other side, the tetraketide arm is synthesized by a the squalestatin tetraketide synthase pks1 and enzymatically esterified to the core in the last biosynthetic step, by the acetyltransferase M4. The biosynthesis of the tetraketide must involve 3 rounds of chain extension. After the first and second rounds methyl-transfer occurs, and in all rounds of extension the ketoreductase and dehydratase are active. The enoyl reductase and C-MeT of pks1 are not active in the final round of extension. The acetyltransferase M4 appears to have a broad substrate selectivity for its acyl CoA substrate, allowing the in vitro synthesis of novel squalestatins. The biosynthesis of SQS1 requires several oxidative steps likely performed by oxidoreductases M1, R1 and R2. Finally, in support of the identification of the cluster as being responsible for SQS1 production, the cluster contains a gene encoding a putative squalene synthase (SS) R6, suggesting a likely mechanism for self-resistance. The polypeptide is Acyltransferase R4 (Phoma sp. (strain ATCC 20986 / MF5453)).